The chain runs to 1115 residues: PAN2-PAN3 deadenylation complex catalytic subunit PAN2 (1115 aa).

WD repeat units lie at residues 27 to 66 (NRDK…YTRY), 112 to 153 (AAFS…GCLD), 155 to 194 (LLNY…TIKS), 197 to 236 (AHSA…YDLR), and 295 to 334 (HPCQ…MGMF). The segment at 337 to 473 (TPEMLAYPDY…IQTYTSINKY (137 aa)) is linker. The USP domain occupies 474-855 (EVPPAYSRLP…TPEIIIYCDA (382 aa)). Zn(2+) contacts are provided by cysteine 660, histidine 662, cysteine 713, and cysteine 716. Residues 907–1079 (VAIDAEFVSL…EDAHTALILY (173 aa)) form the Exonuclease domain. A divalent metal cation is bound by residues aspartate 910, glutamate 912, aspartate 1020, and aspartate 1071.

This sequence belongs to the peptidase C19 family. PAN2 subfamily. Forms a heterotrimer with an asymmetric homodimer of the regulatory subunit PAN3 to form the poly(A)-nuclease (PAN) deadenylation complex. It depends on a divalent metal cation as a cofactor.

The protein resides in the cytoplasm. The enzyme catalyses Exonucleolytic cleavage of poly(A) to 5'-AMP.. Positively regulated by the regulatory subunit PAN3. Negatively regulated by PAB1-binding protein PBP1. Inhibited under stress conditions. Inhibition of deadenylation under stress increases mRNA stability, which may be a mechanism to retain the majority of the cytoplasmic pool of mRNAs for later reuse and recovery from stress. Catalytic subunit of the poly(A)-nuclease (PAN) deadenylation complex, one of two cytoplasmic mRNA deadenylases involved in mRNA turnover. PAN specifically shortens poly(A) tails of RNA and the activity is stimulated by poly(A)-binding protein PAB1. PAN deadenylation is followed by rapid degradation of the shortened mRNA tails by the CCR4-NOT complex. Deadenylated mRNAs are then degraded by two alternative mechanisms, namely exosome-mediated 3'-5' exonucleolytic degradation, or deadenylation-dependent mRNA decaping by DCP1-DCP2 and subsequent 5'-3' exonucleolytic degradation by XRN1. May also be involved in post-transcriptional maturation of mRNA poly(A) tails, trimming the tails from their synthesized length to the slightly shorter, apparently messenger-specific length found on newly exported mRNAs. PAN cooperates with protein kinase DUN1 in the regulation of RAD5 mRNA levels and cell survival in response to replicational stress. This chain is PAN2-PAN3 deadenylation complex catalytic subunit PAN2, found in Saccharomyces cerevisiae (strain ATCC 204508 / S288c) (Baker's yeast).